A 279-amino-acid chain; its full sequence is Urease accessory protein UreD (279 aa).

Belongs to the UreD family. In terms of assembly, ureD, UreF and UreG form a complex that acts as a GTP-hydrolysis-dependent molecular chaperone, activating the urease apoprotein by helping to assemble the nickel containing metallocenter of UreC. The UreE protein probably delivers the nickel.

It is found in the cytoplasm. Required for maturation of urease via the functional incorporation of the urease nickel metallocenter. The sequence is that of Urease accessory protein UreD from Pseudomonas fluorescens (strain Pf0-1).